The following is a 1645-amino-acid chain: Outer membrane protein B (1645 aa).

Positions 1329-1352 are excised as a propeptide; the sequence is GALRYLSNSETADVGGSETGAVSS. The Autotransporter domain occupies 1357-1645; sequence IDQVSYGVWA…QGTLKVRINF (289 aa).

Belongs to the rickettsiae OmpA/OmpB family.

The protein resides in the periplasm. Its subcellular location is the secreted. It is found in the cell surface. It localises to the cell outer membrane. In terms of biological role, the 120 kDa surface-exposed protein is a major structural protein which may play a role as a rickettsial virulence factor and/or immunogen during infection. Its function is as follows. The 32 kDa beta peptide may serve as a membrane anchor. This chain is Outer membrane protein B (ompB), found in Rickettsia typhi (strain ATCC VR-144 / Wilmington).